A 209-amino-acid polypeptide reads, in one-letter code: Outer-membrane lipoprotein carrier protein (209 aa).

The signal sequence occupies residues 1–21; sequence MHRQLRYAVLATALFASTAFA.

It belongs to the LolA family. In terms of assembly, monomer.

It is found in the periplasm. Participates in the translocation of lipoproteins from the inner membrane to the outer membrane. Only forms a complex with a lipoprotein if the residue after the N-terminal Cys is not an aspartate (The Asp acts as a targeting signal to indicate that the lipoprotein should stay in the inner membrane). The polypeptide is Outer-membrane lipoprotein carrier protein (Xanthomonas oryzae pv. oryzae (strain MAFF 311018)).